Reading from the N-terminus, the 251-residue chain is Enolase-phosphatase E1 (251 aa).

2 residues coordinate Mg(2+): D13 and E15. Substrate is bound by residues 137–138 (SS) and K183. Mg(2+) is bound at residue D210.

Belongs to the HAD-like hydrolase superfamily. MasA/MtnC family. Monomer. Mg(2+) is required as a cofactor.

It localises to the cytoplasm. The protein localises to the nucleus. It catalyses the reaction 5-methylsulfanyl-2,3-dioxopentyl phosphate + H2O = 1,2-dihydroxy-5-(methylsulfanyl)pent-1-en-3-one + phosphate. It functions in the pathway amino-acid biosynthesis; L-methionine biosynthesis via salvage pathway; L-methionine from S-methyl-5-thio-alpha-D-ribose 1-phosphate: step 3/6. Its pathway is amino-acid biosynthesis; L-methionine biosynthesis via salvage pathway; L-methionine from S-methyl-5-thio-alpha-D-ribose 1-phosphate: step 4/6. Functionally, bifunctional enzyme that catalyzes the enolization of 2,3-diketo-5-methylthiopentyl-1-phosphate (DK-MTP-1-P) into the intermediate 2-hydroxy-3-keto-5-methylthiopentenyl-1-phosphate (HK-MTPenyl-1-P), which is then dephosphorylated to form the acireductone 1,2-dihydroxy-3-keto-5-methylthiopentene (DHK-MTPene). The chain is Enolase-phosphatase E1 from Candida glabrata (strain ATCC 2001 / BCRC 20586 / JCM 3761 / NBRC 0622 / NRRL Y-65 / CBS 138) (Yeast).